Reading from the N-terminus, the 235-residue chain is Large ribosomal subunit protein uL3 (235 aa).

Belongs to the universal ribosomal protein uL3 family. In terms of assembly, part of the 50S ribosomal subunit. Forms a cluster with proteins L14 and L19.

One of the primary rRNA binding proteins, it binds directly near the 3'-end of the 23S rRNA, where it nucleates assembly of the 50S subunit. This chain is Large ribosomal subunit protein uL3, found in Frankia casuarinae (strain DSM 45818 / CECT 9043 / HFP020203 / CcI3).